The sequence spans 593 residues: NADH-quinone oxidoreductase subunit C/D (593 aa).

The tract at residues 1–184 (MTADNAIFIP…DPYSLTLAKQ (184 aa)) is NADH dehydrogenase I subunit C. The interval 208–593 (DYMFLNLGPN…IDFVMADVDR (386 aa)) is NADH dehydrogenase I subunit D.

In the N-terminal section; belongs to the complex I 30 kDa subunit family. This sequence in the C-terminal section; belongs to the complex I 49 kDa subunit family. As to quaternary structure, NDH-1 is composed of 13 different subunits. Subunits NuoB, CD, E, F, and G constitute the peripheral sector of the complex.

The protein resides in the cell inner membrane. The enzyme catalyses a quinone + NADH + 5 H(+)(in) = a quinol + NAD(+) + 4 H(+)(out). Functionally, NDH-1 shuttles electrons from NADH, via FMN and iron-sulfur (Fe-S) centers, to quinones in the respiratory chain. The immediate electron acceptor for the enzyme in this species is believed to be ubiquinone. Couples the redox reaction to proton translocation (for every two electrons transferred, four hydrogen ions are translocated across the cytoplasmic membrane), and thus conserves the redox energy in a proton gradient. The chain is NADH-quinone oxidoreductase subunit C/D from Pseudomonas putida (strain ATCC 700007 / DSM 6899 / JCM 31910 / BCRC 17059 / LMG 24140 / F1).